The following is a 546-amino-acid chain: Probable protein kinase UbiB (546 aa).

Positions 124-502 (DFSVEPLASA…HVRQGQSRYL (379 aa)) constitute a Protein kinase domain. ATP is bound by residues 130–138 (LASASIAQV) and K153. D288 functions as the Proton acceptor in the catalytic mechanism. The next 2 helical transmembrane spans lie at 501–521 (YLFG…IHRP) and 522–542 (EWGM…LIGW).

This sequence belongs to the ABC1 family. UbiB subfamily.

Its subcellular location is the cell inner membrane. It functions in the pathway cofactor biosynthesis; ubiquinone biosynthesis [regulation]. Its function is as follows. Is probably a protein kinase regulator of UbiI activity which is involved in aerobic coenzyme Q (ubiquinone) biosynthesis. This is Probable protein kinase UbiB from Klebsiella pneumoniae (strain 342).